A 258-amino-acid chain; its full sequence is Undecaprenyl-diphosphatase (258 aa).

8 consecutive transmembrane segments (helical) span residues 1–21 (MDFLNAVILGIVEGLTEFLPV), 42–62 (LKCFEVVIQLGSILAVVFMFF), 69–89 (FNLWIKLAIGFVPTAIIGFLA), 96–116 (FFEPSTVAYMLIIGGIVFIVV), 135–155 (VSFKQAFIIGLSQCFAMIPGT), 173–193 (EVAARFSFLLAIPTMFAATAY), 211–231 (IFLVGGFMAFIVALIVIKLFL), and 237–257 (FSYISFGIYRIILGSIFLIYI).

The protein belongs to the UppP family.

The protein localises to the cell inner membrane. It carries out the reaction di-trans,octa-cis-undecaprenyl diphosphate + H2O = di-trans,octa-cis-undecaprenyl phosphate + phosphate + H(+). Functionally, catalyzes the dephosphorylation of undecaprenyl diphosphate (UPP). Confers resistance to bacitracin. The sequence is that of Undecaprenyl-diphosphatase from Campylobacter fetus subsp. fetus (strain 82-40).